The chain runs to 415 residues: Tyrosine--tRNA ligase (415 aa).

Tyr-34 provides a ligand contact to L-tyrosine. Residues Pro-39–Asn-48 carry the 'HIGH' region motif. L-tyrosine contacts are provided by Tyr-163 and Gln-167. A 'KMSKS' region motif is present at residues Lys-225–Ser-229. Lys-228 provides a ligand contact to ATP. One can recognise an S4 RNA-binding domain in the interval Glu-349–Lys-414.

Belongs to the class-I aminoacyl-tRNA synthetase family. TyrS type 1 subfamily. Homodimer.

It localises to the cytoplasm. The enzyme catalyses tRNA(Tyr) + L-tyrosine + ATP = L-tyrosyl-tRNA(Tyr) + AMP + diphosphate + H(+). Its function is as follows. Catalyzes the attachment of tyrosine to tRNA(Tyr) in a two-step reaction: tyrosine is first activated by ATP to form Tyr-AMP and then transferred to the acceptor end of tRNA(Tyr). The sequence is that of Tyrosine--tRNA ligase from Mycoplasma mobile (strain ATCC 43663 / 163K / NCTC 11711) (Mesomycoplasma mobile).